The sequence spans 985 residues: Coiled-coil domain-containing protein 33 (985 aa).

Residues 228-263 are disordered; the sequence is MSPFSTDSDQEGLSWEAGPWQHPAQVPEEPQGRLDT. A C2 domain is found at 263-398; sequence TSQDPYPAAN…VFLRGVNEPL (136 aa). Residues 599-745 are a coiled coil; it reads VEMNNYRRAM…LEERLCERKE (147 aa). A disordered region spans residues 821–842; it reads AERLQDTNGPGHPKSTETLPAQ. Residues 885 to 928 are a coiled coil; it reads DKFNLLAKLEQAQSRILSLENQLEESARHWAREKQNLAIRLQEQ. The interval 931–985 is disordered; that stretch reads GFGQPPNSIIIDQPNAGASKNPQQLSKLEPSLPSSDKKLNRPSDSQIEISNNQKT. Polar residues-rich tracts occupy residues 946–956 and 972–985; these read AGASKNPQQLS and PSDS…NQKT.

This chain is Coiled-coil domain-containing protein 33 (Ccdc33), found in Mus musculus (Mouse).